The chain runs to 463 residues: Fumarate hydratase class II (463 aa).

Substrate-binding positions include 98–100 (SGT), 129–132 (HPND), 139–141 (SSN), and T187. The active-site Proton donor/acceptor is H188. Residue S318 is part of the active site. Substrate contacts are provided by residues S319 and 324–326 (KVN).

The protein belongs to the class-II fumarase/aspartase family. Fumarase subfamily. In terms of assembly, homotetramer.

It is found in the cytoplasm. The enzyme catalyses (S)-malate = fumarate + H2O. It functions in the pathway carbohydrate metabolism; tricarboxylic acid cycle; (S)-malate from fumarate: step 1/1. In terms of biological role, involved in the TCA cycle. Catalyzes the stereospecific interconversion of fumarate to L-malate. This Rickettsia bellii (strain RML369-C) protein is Fumarate hydratase class II.